The sequence spans 110 residues: U32-theraphotoxin-Cg1a (110 aa).

Positions 1–19 are cleaved as a signal peptide; sequence MNHCFLILFTLIVFTVVWS. Positions 20-43 are excised as a propeptide; that stretch reads LEENEEYPDEDEMIESFMDGYSYR. 4 disulfide bridges follow: Cys-49/Cys-63, Cys-56/Cys-69, Cys-60/Cys-105, and Cys-62/Cys-80.

The protein belongs to the neurotoxin 03 (Tx2) family. 02 subfamily. Expressed by the venom gland.

It is found in the secreted. Its function is as follows. Probable ion channel inhibitor. This Chilobrachys guangxiensis (Chinese earth tiger tarantula) protein is U32-theraphotoxin-Cg1a.